The sequence spans 442 residues: ATP-dependent protease ATPase subunit HslU (442 aa).

ATP is bound by residues I18 and G60 to E65. The interval D133–Q156 is disordered. ATP contacts are provided by D255, E320, and R392.

Belongs to the ClpX chaperone family. HslU subfamily. In terms of assembly, a double ring-shaped homohexamer of HslV is capped on each side by a ring-shaped HslU homohexamer. The assembly of the HslU/HslV complex is dependent on binding of ATP.

The protein resides in the cytoplasm. In terms of biological role, ATPase subunit of a proteasome-like degradation complex; this subunit has chaperone activity. The binding of ATP and its subsequent hydrolysis by HslU are essential for unfolding of protein substrates subsequently hydrolyzed by HslV. HslU recognizes the N-terminal part of its protein substrates and unfolds these before they are guided to HslV for hydrolysis. The polypeptide is ATP-dependent protease ATPase subunit HslU (Shewanella sp. (strain ANA-3)).